Reading from the N-terminus, the 400-residue chain is Nicotinate phosphoribosyltransferase (400 aa).

A Phosphohistidine; by autocatalysis modification is found at histidine 220.

It belongs to the NAPRTase family. Post-translationally, transiently phosphorylated on a His residue during the reaction cycle. Phosphorylation strongly increases the affinity for substrates and increases the rate of nicotinate D-ribonucleotide production. Dephosphorylation regenerates the low-affinity form of the enzyme, leading to product release.

It carries out the reaction nicotinate + 5-phospho-alpha-D-ribose 1-diphosphate + ATP + H2O = nicotinate beta-D-ribonucleotide + ADP + phosphate + diphosphate. It participates in cofactor biosynthesis; NAD(+) biosynthesis; nicotinate D-ribonucleotide from nicotinate: step 1/1. Functionally, catalyzes the synthesis of beta-nicotinate D-ribonucleotide from nicotinate and 5-phospho-D-ribose 1-phosphate at the expense of ATP. This Escherichia coli O157:H7 protein is Nicotinate phosphoribosyltransferase.